The chain runs to 333 residues: 4-hydroxy-2-oxovalerate aldolase (333 aa).

Positions 3-253 (ILINDSTLRD…NTGIDLYHFL (251 aa)) constitute a Pyruvate carboxyltransferase domain. 11 to 12 (RD) is a substrate binding site. Position 12 (aspartate 12) interacts with Mn(2+). The Proton acceptor role is filled by histidine 15. Positions 165 and 192 each coordinate substrate. The Mn(2+) site is built by histidine 192 and histidine 194.

The protein belongs to the 4-hydroxy-2-oxovalerate aldolase family. As to quaternary structure, interacts with MhpF.

The catalysed reaction is (S)-4-hydroxy-2-oxopentanoate = acetaldehyde + pyruvate. Its pathway is aromatic compound metabolism; 3-phenylpropanoate degradation. Functionally, catalyzes the retro-aldol cleavage of 4-hydroxy-2-oxopentanoate to pyruvate and acetaldehyde. Is involved in the meta-cleavage pathway for the degradation of aromatic compounds. The sequence is that of 4-hydroxy-2-oxovalerate aldolase from Serratia proteamaculans (strain 568).